A 443-amino-acid polypeptide reads, in one-letter code: COP9 signalosome complex subunit 2 (443 aa).

Residues 254–416 (AHTDFFEAFK…QLLELDHQKR (163 aa)) form the PCI domain.

The protein belongs to the CSN2 family. As to quaternary structure, component of the CSN complex, probably composed of cops1, cops2, cops3, cops4, cops5, cops6, cops7, cops8 and cops9.

Its subcellular location is the cytoplasm. The protein localises to the nucleus. Its function is as follows. Essential component of the COP9 signalosome complex (CSN), a complex involved in various cellular and developmental processes. The CSN complex is an essential regulator of the ubiquitin (Ubl) conjugation pathway by mediating the deneddylation of the cullin subunits of E3 ligase complexes, leading to modify the Ubl ligase activity. In Danio rerio (Zebrafish), this protein is COP9 signalosome complex subunit 2 (cops2).